Consider the following 221-residue polypeptide: Oxaloacetate tautomerase FAHD1, mitochondrial (221 aa).

Residues 1-24 (MAASRPLSRFWEWGKNIVCVGRNY) constitute a mitochondrion transit peptide. Position 37 is a phosphoserine (S37). Residues E68, E70, and D99 each contribute to the Mg(2+) site. K110 is subject to N6-acetyllysine. Position 112 is an N6-succinyllysine (K112).

It belongs to the FAH family. As to quaternary structure, homodimer. It depends on Mg(2+) as a cofactor. Mn(2+) is required as a cofactor.

It is found in the mitochondrion. The protein localises to the cytoplasm. The protein resides in the cytosol. It carries out the reaction oxaloacetate = enol-oxaloacetate. It catalyses the reaction oxaloacetate + H(+) = pyruvate + CO2. The enzyme catalyses a 3-acylpyruvate + H2O = a carboxylate + pyruvate + H(+). The catalysed reaction is acetylpyruvate + H2O = acetate + pyruvate + H(+). It carries out the reaction 3-fumarylpyruvate + H2O = fumarate + pyruvate + H(+). With respect to regulation, oxaloacetate decarboxylation is competitively inhibited by oxalate. In terms of biological role, tautomerase that converts enol-oxaloacetate, a strong inhibitor of succinate dehydrogenase, to the physiological keto form of oxaloacetate. It is thereby required to maximize aerobic respiration efficiency by preventing succinate dehydrogenase inhibition. Also acts as a weak oxaloacetate decarboxylase (ODx), catalyzing the decarboxylation of oxaloacetate (OAA) to pyruvate and CO(2), and as such is likely a regulatory enzyme in the TCA cycle. Also displays acylpyruvase activity, being able to hydrolyze acetylpyruvate and fumarylpyruvate in vitro. The polypeptide is Oxaloacetate tautomerase FAHD1, mitochondrial (Bos taurus (Bovine)).